A 159-amino-acid polypeptide reads, in one-letter code: Phosphopantetheine adenylyltransferase (159 aa).

Thr-10 lines the substrate pocket. ATP is bound by residues 10–11 (TF) and His-18. The substrate site is built by Lys-42, Leu-74, and Arg-88. Residues 89–91 (GLR), Glu-99, and 124–130 (NSFISST) contribute to the ATP site.

Belongs to the bacterial CoaD family. Homohexamer. The cofactor is Mg(2+).

It is found in the cytoplasm. The enzyme catalyses (R)-4'-phosphopantetheine + ATP + H(+) = 3'-dephospho-CoA + diphosphate. It participates in cofactor biosynthesis; coenzyme A biosynthesis; CoA from (R)-pantothenate: step 4/5. In terms of biological role, reversibly transfers an adenylyl group from ATP to 4'-phosphopantetheine, yielding dephospho-CoA (dPCoA) and pyrophosphate. In Shewanella pealeana (strain ATCC 700345 / ANG-SQ1), this protein is Phosphopantetheine adenylyltransferase.